The primary structure comprises 561 residues: Liver carboxylesterase 1F (561 aa).

Positions 1–18 (MCLSFLFLVSLATCVVYG) are cleaved as a signal peptide. N-linked (GlcNAc...) asparagine glycosylation occurs at Asn79. Cys87 and Cys116 are joined by a disulfide. Ser221 (acyl-ester intermediate) is an active-site residue. The cysteines at positions 273 and 284 are disulfide-linked. Catalysis depends on charge relay system residues Glu353 and His466. The Prevents secretion from ER signature appears at 558–561 (HNEL).

The protein belongs to the type-B carboxylesterase/lipase family. Expressed in liver and kidney.

Its subcellular location is the lipid droplet. The protein resides in the cytoplasm. The protein localises to the cytosol. It is found in the endoplasmic reticulum. It localises to the microsome. It carries out the reaction a carboxylic ester + H2O = an alcohol + a carboxylate + H(+). The catalysed reaction is all-trans-retinyl hexadecanoate + H2O = all-trans-retinol + hexadecanoate + H(+). In terms of biological role, involved in the detoxification of xenobiotics and in the activation of ester and amide prodrugs. Hydrolyzes retinyl esters. Hydrolyzes p-nitrophenyl butyrate (PNPB), triacylglycerol and monoacylglycerol. Shows higher activity against PNPB, a short-chain fatty acid ester, than against triolein, a long-chain fatty acid ester. Shows no detectable activity against diacylglycerol, cholesterol ester or phospholipids. May play a role in adipocyte lipolysis. The chain is Liver carboxylesterase 1F from Rattus norvegicus (Rat).